The sequence spans 544 residues: Ell-associated factor Eaf (544 aa).

The interval 147 to 544 (QSVPMNMGHQ…LSSNSSDDDD (398 aa)) is disordered. Residues 193–202 (SSKDKVDFKP) show a composition bias toward basic and acidic residues. Serine 205 carries the post-translational modification Phosphoserine. Residues 264 to 273 (SGSSTGSSSG) show a composition bias toward low complexity. Over residues 287-299 (GKQRQAHGKRQQI) the composition is skewed to basic residues. Low complexity-rich tracts occupy residues 305-319 (PPVQ…QQQP), 333-374 (QPHP…QQRP), and 396-407 (ASQSVAQAAAVL). A compositionally biased stretch (acidic residues) spans 425 to 440 (DSSDSDSGSDSDDSTE). Low complexity-rich tracts occupy residues 450-483 (EQQQ…HMNQ), 503-513 (QQPQPQPQQQQ), and 526-544 (NDLL…DDDD).

Belongs to the EAF family.

The protein resides in the nucleus. In terms of biological role, promotes transcriptional elongation by Su(Tpl)/ELL. Essential for development. In Drosophila persimilis (Fruit fly), this protein is Ell-associated factor Eaf.